A 346-amino-acid polypeptide reads, in one-letter code: Endo-1,4-beta-xylanase B (346 aa).

Positions 1–19 (MKGLPALLLLLIGCVSSFG) are cleaved as a signal peptide. The GH10 domain maps to 41–338 (GNNFWSLPDA…KPCYFAIREL (298 aa)). The Proton donor role is filled by E153. E259 serves as the catalytic Nucleophile.

Belongs to the glycosyl hydrolase 10 (cellulase F) family.

The enzyme catalyses Endohydrolysis of (1-&gt;4)-beta-D-xylosidic linkages in xylans.. The polypeptide is Endo-1,4-beta-xylanase B (xynB) (Thermotoga neapolitana).